The sequence spans 358 residues: Methionine aminopeptidase 2 (358 aa).

Histidine 109 provides a ligand contact to substrate. The a divalent metal cation site is built by aspartate 130, aspartate 141, and histidine 210. Residue histidine 218 participates in substrate binding. Glutamate 243 and glutamate 339 together coordinate a divalent metal cation.

Belongs to the peptidase M24A family. Methionine aminopeptidase eukaryotic type 2 subfamily. It depends on Co(2+) as a cofactor. Requires Zn(2+) as cofactor. Mn(2+) serves as cofactor. Fe(2+) is required as a cofactor.

Its subcellular location is the cytoplasm. It carries out the reaction Release of N-terminal amino acids, preferentially methionine, from peptides and arylamides.. Cotranslationally removes the N-terminal methionine from nascent proteins. The N-terminal methionine is often cleaved when the second residue in the primary sequence is small and uncharged (Met-Ala-, Cys, Gly, Pro, Ser, Thr, or Val). In Encephalitozoon cuniculi (strain GB-M1) (Microsporidian parasite), this protein is Methionine aminopeptidase 2.